We begin with the raw amino-acid sequence, 147 residues long: Large ribosomal subunit protein bL9 (147 aa).

Belongs to the bacterial ribosomal protein bL9 family.

Functionally, binds to the 23S rRNA. The sequence is that of Large ribosomal subunit protein bL9 from Helicobacter hepaticus (strain ATCC 51449 / 3B1).